A 249-amino-acid polypeptide reads, in one-letter code: Methyl-coenzyme M reductase I subunit gamma (249 aa).

Arg120 is a binding site for coenzyme M.

The protein belongs to the methyl-coenzyme M reductase gamma subunit family. In terms of assembly, MCR is a hexamer of two alpha, two beta, and two gamma chains, forming a dimer of heterotrimers. Requires coenzyme F430 as cofactor.

It is found in the cytoplasm. The enzyme catalyses coenzyme B + methyl-coenzyme M = methane + coenzyme M-coenzyme B heterodisulfide. The protein operates within one-carbon metabolism; methyl-coenzyme M reduction; methane from methyl-coenzyme M: step 1/1. Its activity is regulated as follows. Methyl-coenzyme M reductase activity is inhibited by 3-nitrooxypropanol (3-NOP) in vitro and in vivo, by oxidation of its active site Ni(I), which stops both growth and methanogenesis. Is also inhibited by the reaction product CoM-S-S-CoB. Component of the methyl-coenzyme M reductase (MCR) I that catalyzes the reductive cleavage of methyl-coenzyme M (CoM-S-CH3 or 2-(methylthio)ethanesulfonate) using coenzyme B (CoB or 7-mercaptoheptanoylthreonine phosphate) as reductant which results in the production of methane and the mixed heterodisulfide of CoB and CoM (CoM-S-S-CoB). This is the final step in methanogenesis. Neither N-6-mercaptohexanoylthreonine phosphate (H-S-HxoTP) nor N-8-mercaptooctanoylthreonine phosphate (H-SOcoTP) nor any other thiol compound such as CoA or CoM can substitute for CoB as the electron donor. The sequence is that of Methyl-coenzyme M reductase I subunit gamma (mcrG) from Methanothermobacter marburgensis (strain ATCC BAA-927 / DSM 2133 / JCM 14651 / NBRC 100331 / OCM 82 / Marburg) (Methanobacterium thermoautotrophicum).